The primary structure comprises 1733 residues: Gag-Pol polyprotein (1733 aa).

Residue Gly2 is the site of N-myristoyl glycine; by host attachment. The short motif at 109–112 is the PTAP/PSAP motif element; the sequence is PTAP. Residues 128 to 132 carry the LYPX(n)L motif motif; the sequence is LYPAL. Disordered regions lie at residues 139 to 218, 449 to 497, and 511 to 549; these read KPPK…LRMG, KEER…RPQL, and WAKD…PEPR. Residues 161–164 carry the PPXY motif motif; the sequence is PPPY. At Ser190 the chain carries Phosphoserine; by host. The stretch at 436–476 forms a coiled coil; the sequence is EEREERIRREIEEKEERRRAEDEQRERERDRRRHREMSKLL. Basic and acidic residues-rich tracts occupy residues 449 to 464 and 484 to 497; these read KEER…ERER and RQDR…RPQL. A CCHC-type zinc finger spans residues 500 to 517; sequence DQCAYCKEKGHWAKDCPK. The segment covering 526–535 has biased composition (low complexity); sequence RPQTSLLTLG. In terms of domain architecture, Peptidase A2 spans 559–629; the sequence is VTFLVDTGAQ…CPYPLLGRDL (71 aa). The active-site Protease; shared with dimeric partner is Asp564. 4 residues coordinate RNA: Tyr721, Asp771, Arg773, and Pro787. Positions 739-930 constitute a Reverse transcriptase domain; that stretch reads LDQGILVPCQ…KQVKYLGYLL (192 aa). Asp807 lines the Mg(2+) pocket. RNA is bound by residues Asn851 and Pro853. Mg(2+) contacts are provided by Asp881 and Asp882. The DNA site is built by Arg941, Arg955, Arg958, and Phe966. Residues Lys1054 and Lys1055 each coordinate RNA. Residue Trp1063 coordinates DNA. Residue Lys1082 coordinates RNA. Residue Arg1113 participates in DNA binding. Residues 1172 to 1318 enclose the RNase H type-1 domain; it reads PDADYTWYTD…ADQAAREAAM (147 aa). Mg(2+) is bound at residue Asp1181. RNA-binding residues include Ser1184 and Leu1186. Positions 1187, 1214, and 1216 each coordinate DNA. Residues Glu1219 and Asp1240 each contribute to the Mg(2+) site. RNA-binding residues include Arg1242 and Arg1266. Asp1310, Asp1453, and Asp1512 together coordinate Mg(2+). The Integrase catalytic domain occupies 1442–1600; that stretch reads RGHRPGTHWE…TPYEILYGAP (159 aa).

Homohexamer, that further associates as homomultimer. The virus core is composed of a lattice formed from hexagonal rings, each containing six capsid monomers. The protease is a homodimer, whose active site consists of two apposed aspartic acid residues. The reverse transcriptase is a monomer. As to quaternary structure, interacts (via PPXY motif) with host NEDD4. Interacts (via PSAP motif) with host TSG101. Interacts (via LYPX(n)L motif) with host PDCD6IP. In terms of assembly, the reverse transcriptase is a monomer (Potential). Interacts (via RNase domains) with host release factor ETF1; this interaction is essential for translational readthrough of amber codon between viral gag and pol genes, as well as for viral replication. Homodimer. Mg(2+) serves as cofactor. The cofactor is Mn(2+). Specific enzymatic cleavages by the viral protease yield mature proteins. The protease is released by autocatalytic cleavage. The polyprotein is cleaved during and after budding, this process is termed maturation. Post-translationally, sumoylated; which is required for virus replication. In terms of processing, phosphorylated on serine residues.

It is found in the host cell membrane. The protein resides in the virion. It catalyses the reaction DNA(n) + a 2'-deoxyribonucleoside 5'-triphosphate = DNA(n+1) + diphosphate. The catalysed reaction is Endonucleolytic cleavage to 5'-phosphomonoester.. Plays a role in budding and is processed by the viral protease during virion maturation outside the cell. During budding, it recruits, in a PPXY-dependent or independent manner, Nedd4-like ubiquitin ligases that conjugate ubiquitin molecules to Gag, or to Gag binding host factors. Interaction with HECT ubiquitin ligases probably link the viral protein to the host ESCRT pathway and facilitate release. Functionally, targets Gag and gag-pol polyproteins to the plasma membrane via a multipartite membrane binding signal, that includes its myristoylated N-terminus. Also mediates nuclear localization of the pre-integration complex. Its function is as follows. Forms the spherical core of the virion that encapsulates the genomic RNA-nucleocapsid complex. In terms of biological role, involved in the packaging and encapsidation of two copies of the genome. Binds with high affinity to conserved UCUG elements within the packaging signal, located near the 5'-end of the genome. This binding is dependent on genome dimerization. Acts as a nucleic acid chaperone which is involved in rearrangement of nucleic acid secondary structures during gRNA retrotranscription. The aspartyl protease mediates proteolytic cleavages of Gag and Gag-Pol polyproteins during or shortly after the release of the virion from the plasma membrane. Cleavages take place as an ordered, step-wise cascade to yield mature proteins. This process is called maturation. Displays maximal activity during the budding process just prior to particle release from the cell. Functionally, RT is a multifunctional enzyme that converts the viral dimeric RNA genome into dsDNA in the cytoplasm, shortly after virus entry into the cell. This enzyme displays a DNA polymerase activity that can copy either DNA or RNA templates, and a ribonuclease H (RNase H) activity that cleaves the RNA strand of RNA-DNA heteroduplexes in a partially processive 3' to 5' endonucleasic mode. Conversion of viral genomic RNA into dsDNA requires many steps. A tRNA binds to the primer-binding site (PBS) situated at the 5' end of the viral RNA. RT uses the 3' end of the tRNA primer to perform a short round of RNA-dependent minus-strand DNA synthesis. The reading proceeds through the U5 region and ends after the repeated (R) region which is present at both ends of viral RNA. The portion of the RNA-DNA heteroduplex is digested by the RNase H, resulting in a ssDNA product attached to the tRNA primer. This ssDNA/tRNA hybridizes with the identical R region situated at the 3' end of viral RNA. This template exchange, known as minus-strand DNA strong stop transfer, can be either intra- or intermolecular. RT uses the 3' end of this newly synthesized short ssDNA to perform the RNA-dependent minus-strand DNA synthesis of the whole template. RNase H digests the RNA template except for a polypurine tract (PPT) situated at the 5' end of the genome. It is not clear if both polymerase and RNase H activities are simultaneous. RNase H probably can proceed both in a polymerase-dependent (RNA cut into small fragments by the same RT performing DNA synthesis) and a polymerase-independent mode (cleavage of remaining RNA fragments by free RTs). Secondly, RT performs DNA-directed plus-strand DNA synthesis using the PPT that has not been removed by RNase H as primers. PPT and tRNA primers are then removed by RNase H. The 3' and 5' ssDNA PBS regions hybridize to form a circular dsDNA intermediate. Strand displacement synthesis by RT to the PBS and PPT ends produces a blunt ended, linear dsDNA copy of the viral genome that includes long terminal repeats (LTRs) at both ends. Its function is as follows. Catalyzes viral DNA integration into the host chromosome, by performing a series of DNA cutting and joining reactions. This enzyme activity takes place after virion entry into a cell and reverse transcription of the RNA genome in dsDNA. The first step in the integration process is 3' processing. This step requires a complex comprising the viral genome, matrix protein and integrase. This complex is called the pre-integration complex (PIC). The integrase protein removes 2 nucleotides from each 3' end of the viral DNA, leaving recessed CA OH's at the 3' ends. In the second step that requires cell division, the PIC enters cell nucleus. In the third step, termed strand transfer, the integrase protein joins the previously processed 3' ends to the 5' ends of strands of target cellular DNA at the site of integration. The last step is viral DNA integration into host chromosome. This chain is Gag-Pol polyprotein (gag-pol), found in Homo sapiens (Human).